We begin with the raw amino-acid sequence, 160 residues long: Keratin-associated protein 13-4 (160 aa).

4 repeat units span residues 41–50 (CQLGSSLYRD), 51–60 (CQKTCWEPAS), 61–70 (CQKSCYHPRT), and 77–86 (CQTTCSGSLG). A 4 X 10 AA approximate repeats region spans residues 41 to 86 (CQLGSSLYRDCQKTCWEPASCQKSCYHPRTSMLCCPCQTTCSGSLG).

This sequence belongs to the PMG family. As to quaternary structure, interacts with hair keratins.

Its function is as follows. In the hair cortex, hair keratin intermediate filaments are embedded in an interfilamentous matrix, consisting of hair keratin-associated proteins (KRTAP), which are essential for the formation of a rigid and resistant hair shaft through their extensive disulfide bond cross-linking with abundant cysteine residues of hair keratins. The matrix proteins include the high-sulfur and high-glycine-tyrosine keratins. The chain is Keratin-associated protein 13-4 (KRTAP13-4) from Hylobates agilis (Agile gibbon).